The following is a 356-amino-acid chain: S-adenosylmethionine:tRNA ribosyltransferase-isomerase (356 aa).

The protein belongs to the QueA family. Monomer.

The protein resides in the cytoplasm. The catalysed reaction is 7-aminomethyl-7-carbaguanosine(34) in tRNA + S-adenosyl-L-methionine = epoxyqueuosine(34) in tRNA + adenine + L-methionine + 2 H(+). The protein operates within tRNA modification; tRNA-queuosine biosynthesis. In terms of biological role, transfers and isomerizes the ribose moiety from AdoMet to the 7-aminomethyl group of 7-deazaguanine (preQ1-tRNA) to give epoxyqueuosine (oQ-tRNA). The protein is S-adenosylmethionine:tRNA ribosyltransferase-isomerase of Xanthomonas axonopodis pv. citri (strain 306).